The primary structure comprises 177 residues: Large ribosomal subunit protein uL6 (177 aa).

At Lys-44 the chain carries N6-acetyllysine.

It belongs to the universal ribosomal protein uL6 family. In terms of assembly, part of the 50S ribosomal subunit.

Functionally, this protein binds to the 23S rRNA, and is important in its secondary structure. It is located near the subunit interface in the base of the L7/L12 stalk, and near the tRNA binding site of the peptidyltransferase center. The sequence is that of Large ribosomal subunit protein uL6 from Escherichia fergusonii (strain ATCC 35469 / DSM 13698 / CCUG 18766 / IAM 14443 / JCM 21226 / LMG 7866 / NBRC 102419 / NCTC 12128 / CDC 0568-73).